The sequence spans 96 residues: (4S)-4-hydroxy-5-phosphonooxypentane-2,3-dione isomerase (96 aa).

The region spanning 2 to 91 (HVTLVEINVK…MTGPRKKTVF (90 aa)) is the ABM domain.

Belongs to the LsrG family. In terms of assembly, homodimer.

Its subcellular location is the cytoplasm. It carries out the reaction (2S)-2-hydroxy-3,4-dioxopentyl phosphate = 3-hydroxy-2,4-dioxopentyl phosphate. Its function is as follows. Involved in the degradation of phospho-AI-2, thereby terminating induction of the lsr operon and closing the AI-2 signaling cycle. Catalyzes the conversion of (4S)-4-hydroxy-5-phosphonooxypentane-2,3-dione (P-DPD) to 3-hydroxy-5-phosphonooxypentane-2,4-dione (P-HPD). The protein is (4S)-4-hydroxy-5-phosphonooxypentane-2,3-dione isomerase of Yersinia pseudotuberculosis serotype O:1b (strain IP 31758).